A 330-amino-acid polypeptide reads, in one-letter code: 3'-5' exonuclease (330 aa).

Positions 1-92 (MDQYLIKMST…DGTPSPEKEI (92 aa)) are disordered. 2 stretches are compositionally biased toward basic and acidic residues: residues 27 to 39 (NTTR…KEKI) and 48 to 66 (KDTP…ENPP). Phosphoserine occurs at positions 79 and 87. A 3'-5' exonuclease domain is found at 117–289 (SADEVMQWVE…IGQVIYRDIE (173 aa)). Mg(2+)-binding residues include Asp-139, Glu-141, and Asp-277.

This sequence belongs to the WRNexo family.

The protein resides in the nucleus. Its function is as follows. Has exonuclease activity on both single-stranded and duplex templates bearing overhangs, but not blunt ended duplex DNA, and cleaves in a 3'-5' direction. Essential for the formation of DNA replication focal centers. Has an important role in maintaining genome stability. In Drosophila virilis (Fruit fly), this protein is 3'-5' exonuclease.